A 276-amino-acid chain; its full sequence is Glutathione S-transferase-like protein ustS (276 aa).

The 94-residue stretch at 16–109 (STLPGTSKSW…HLDETYPDPP (94 aa)) folds into the GST N-terminal domain.

The protein belongs to the GST superfamily.

It functions in the pathway mycotoxin biosynthesis. In terms of biological role, glutathione S-transferase-like protein; part of the gene cluster that mediates the biosynthesis of the secondary metabolite ustiloxin B, an antimitotic tetrapeptide. First, ustA is processed by the subtilisin-like endoprotease Kex2 that is outside the ustiloxin B gene cluster, at the C-terminal side of Arg-Lys, after transfer to Golgi apparatus through the endoplasmic reticulum (ER). Cleavage by KEX2 generates 16 peptides YAIG-I to YAIG-XVI. To process the precursor peptide further, at least two peptidases are necessary to cleave the N-terminal and C-terminal sides of the Tyr-Ala-Ile-Gly core peptide which serves as backbone for the synthesis of ustiloxin B, through cyclization and modification of the tyrosine with a non-protein coding amino acid, norvaline. One of the two peptidases must be the serine peptidase ustP; and the other pepdidase is probably ustH. Macrocyclization of the core peptide derived from ustA requires the tyrosinase ustQ, as well as the homologous oxidases ustYa and ustYb, and leads to the production of the first cyclization product N-desmethylustiloxin F. For the formation of N-desmethylustiloxin F, three oxidation steps are required, hydroxylation at the benzylic position, hydroxylation at either the aromatic ring of Tyr or beta-position of Ile, and oxidative cyclization. UstQ may catalyze the oxidation of a phenol moiety, whereas the ustYa and ustYb are most likely responsible for the remaining two-step oxidations. N-desmethylustiloxin F is then methylated by ustM to yield ustiloxin F which in turn substrate of the cytochrome P450 monooxygenase ustC which catalyzes the formation of S-deoxyustiloxin H. The flavoprotein monooxygenases ustF1 and ustF2 then participate in the modification of the side chain of S-deoxyustiloxin H, leading to the synthesis of an oxime intermediate, via ustiloxin H. Finally, carboxylative dehydration performed by the cysteine desulfurase-like protein ustD yields ustiloxin B. In Aspergillus flavus (strain ATCC 200026 / FGSC A1120 / IAM 13836 / NRRL 3357 / JCM 12722 / SRRC 167), this protein is Glutathione S-transferase-like protein ustS.